Reading from the N-terminus, the 196-residue chain is MFTQSDTGKIEEIFTTNTMAFETTAITFFFILLICFICILLLLAIFLYKCYRGHNHEEPLKTLCTGEGCVAANAEMDKPEDQDKVLMHFLNMGLPMKPSILVQKQSKEEMATSLGDNIKAEDYQKKQTYEPVNARETNHEGELAEKMPIHVHRSSDTGSQKRPLKGVTFSKEVIVVDLGNEYPTPRSYAREHKERK.

Residues 26–46 (ITFFFILLICFICILLLLAIF) traverse the membrane as a helical segment.

The protein resides in the membrane. This is an uncharacterized protein from Mus musculus (Mouse).